Reading from the N-terminus, the 334-residue chain is Aspartate carbamoyltransferase catalytic subunit (334 aa).

Residues Arg71 and Thr72 each contribute to the carbamoyl phosphate site. Lys99 contributes to the L-aspartate binding site. Positions 121, 151, and 154 each coordinate carbamoyl phosphate. Residues Arg184 and Arg239 each coordinate L-aspartate. Residues Gly280 and Pro281 each coordinate carbamoyl phosphate.

The protein belongs to the aspartate/ornithine carbamoyltransferase superfamily. ATCase family. In terms of assembly, heterododecamer (2C3:3R2) of six catalytic PyrB chains organized as two trimers (C3), and six regulatory PyrI chains organized as three dimers (R2).

It carries out the reaction carbamoyl phosphate + L-aspartate = N-carbamoyl-L-aspartate + phosphate + H(+). It functions in the pathway pyrimidine metabolism; UMP biosynthesis via de novo pathway; (S)-dihydroorotate from bicarbonate: step 2/3. In terms of biological role, catalyzes the condensation of carbamoyl phosphate and aspartate to form carbamoyl aspartate and inorganic phosphate, the committed step in the de novo pyrimidine nucleotide biosynthesis pathway. In Pseudomonas syringae pv. tomato (strain ATCC BAA-871 / DC3000), this protein is Aspartate carbamoyltransferase catalytic subunit.